We begin with the raw amino-acid sequence, 172 residues long: MRRWHTVSKNRQLKEAKVAEIKEKMEKAECIVLADYQGLTVEEATELRKKMREEGVEYKVFKNTLSILAAKELGYEGITDLFQGPISIAFGYEDPTAPARILNDFAKDHKKLELKGGMVQGEVYDEDKIKALAAIPPRDVLIAKLLGSFKAPVSNFAYLINAIKEKKESEEA.

It belongs to the universal ribosomal protein uL10 family. As to quaternary structure, part of the ribosomal stalk of the 50S ribosomal subunit. The N-terminus interacts with L11 and the large rRNA to form the base of the stalk. The C-terminus forms an elongated spine to which L12 dimers bind in a sequential fashion forming a multimeric L10(L12)X complex.

Forms part of the ribosomal stalk, playing a central role in the interaction of the ribosome with GTP-bound translation factors. This Clostridium tetani (strain Massachusetts / E88) protein is Large ribosomal subunit protein uL10.